Consider the following 319-residue polypeptide: MAAVDSFQLLYREIARSCSGYVETLALVGACYMASKTVIFMRDCYSLIRLYFVPRLVRHRDLSQQYGQWAIICGASEAIAKAYAEELARHGICVILISKDLSSVSDTARLISNNYGVEAICIEADFNQGPSACKPIKDAISSKDIGFLVNSFDGTLEISQNFLELSESVLWGTINRNIAATTLVTRLALPAMMEKGRGAVVNISSGHCFHPIPRKAAFSASTAFLDNFSRSLHYEYGDQGVFVQSLLPFRVASQRPEGSAPPASWLVPSPQVYASHALSTLGISHRTTGYWPHSMQLGLVKMMPEWVWMLGSRVFTMAT.

Residues 2 to 82 form a required for mitochondria translocation region; the sequence is AAVDSFQLLY…CGASEAIAKA (81 aa). Residues 74–80, Lys-99, and Asp-125 contribute to the NADP(+) site; that span reads GASEAIA.

Belongs to the short-chain dehydrogenases/reductases (SDR) family. 17-beta-HSD 3 subfamily.

It is found in the mitochondrion. This is Inactive hydroxysteroid dehydrogenase-like protein 1 (hsdl1) from Danio rerio (Zebrafish).